Reading from the N-terminus, the 210-residue chain is Quaternary-amine-specific corrinoid protein (210 aa).

The B12-binding N-terminal domain maps to 1–90 (MADWKNLTQA…VLGSGDTAVA (90 aa)). One can recognise a B12-binding domain in the interval 90–210 (AGTILIGTAH…GVKICQAWVG (121 aa)). Residue His103 participates in methylcob(III)alamin binding.

It belongs to the methylamine corrinoid protein family. In terms of assembly, the proline betaine:THF methyl transfer system is composed of two methyltransferases, MtpB and MtqA, and the corrinoid protein MtqC. The L-carnitine:THF methyl transfer system is composed of two methyltransferases, MtcB and MtqA, and the corrinoid protein MtqC.

Functionally, involved in the degradation of the quaternary amines L-proline betaine and L-carnitine. Component of a corrinoid-dependent methyltransferase system that transfers a methyl group from L-proline betaine or L-carnitine to tetrahydrofolate (THF), forming methyl-THF, a key intermediate in the Wood-Ljungdahl acetogenesis pathway. Acts as a methyl group carrier between MtpB or MtcB, and MtqA. A methyl group from L-proline betaine or L-carnitine is first transferred to the corrinoid prosthetic group of MtqC by MtpB or MtcB, respectively, and then transferred from MtqC to THF by MtqA. This is Quaternary-amine-specific corrinoid protein from Eubacterium limosum.